Reading from the N-terminus, the 230-residue chain is Uracil-DNA glycosylase (230 aa).

Aspartate 70 (proton acceptor) is an active-site residue.

This sequence belongs to the uracil-DNA glycosylase (UDG) superfamily. UNG family.

The protein resides in the cytoplasm. It catalyses the reaction Hydrolyzes single-stranded DNA or mismatched double-stranded DNA and polynucleotides, releasing free uracil.. Functionally, excises uracil residues from the DNA which can arise as a result of misincorporation of dUMP residues by DNA polymerase or due to deamination of cytosine. This is Uracil-DNA glycosylase from Pseudomonas fluorescens (strain ATCC BAA-477 / NRRL B-23932 / Pf-5).